A 398-amino-acid chain; its full sequence is 1-deoxy-D-xylulose 5-phosphate reductoisomerase (398 aa).

Residues threonine 10, glycine 11, serine 12, isoleucine 13, glycine 36, lysine 37, asparagine 38, and asparagine 124 each coordinate NADPH. Residue lysine 125 coordinates 1-deoxy-D-xylulose 5-phosphate. Residue glutamate 126 participates in NADPH binding. Aspartate 150 provides a ligand contact to Mn(2+). Residues serine 151, glutamate 152, serine 186, and histidine 209 each contribute to the 1-deoxy-D-xylulose 5-phosphate site. Glutamate 152 lines the Mn(2+) pocket. Residue glycine 215 participates in NADPH binding. Positions 222, 227, 228, and 231 each coordinate 1-deoxy-D-xylulose 5-phosphate. Glutamate 231 serves as a coordination point for Mn(2+).

It belongs to the DXR family. In terms of assembly, homodimer. The cofactor is Mg(2+). It depends on Mn(2+) as a cofactor.

The enzyme catalyses 2-C-methyl-D-erythritol 4-phosphate + NADP(+) = 1-deoxy-D-xylulose 5-phosphate + NADPH + H(+). The protein operates within isoprenoid biosynthesis; isopentenyl diphosphate biosynthesis via DXP pathway; isopentenyl diphosphate from 1-deoxy-D-xylulose 5-phosphate: step 1/6. In terms of biological role, catalyzes the NADPH-dependent rearrangement and reduction of 1-deoxy-D-xylulose-5-phosphate (DXP) to 2-C-methyl-D-erythritol 4-phosphate (MEP). The protein is 1-deoxy-D-xylulose 5-phosphate reductoisomerase of Escherichia coli O157:H7.